The primary structure comprises 299 residues: ATP phosphoribosyltransferase (299 aa).

The protein belongs to the ATP phosphoribosyltransferase family. Long subfamily. In terms of assembly, equilibrium between an active dimeric form, an inactive hexameric form and higher aggregates. Interconversion between the various forms is largely reversible and is influenced by the natural substrates and inhibitors of the enzyme. Mg(2+) serves as cofactor.

It localises to the cytoplasm. The catalysed reaction is 1-(5-phospho-beta-D-ribosyl)-ATP + diphosphate = 5-phospho-alpha-D-ribose 1-diphosphate + ATP. The protein operates within amino-acid biosynthesis; L-histidine biosynthesis; L-histidine from 5-phospho-alpha-D-ribose 1-diphosphate: step 1/9. Feedback inhibited by histidine. Its function is as follows. Catalyzes the condensation of ATP and 5-phosphoribose 1-diphosphate to form N'-(5'-phosphoribosyl)-ATP (PR-ATP). Has a crucial role in the pathway because the rate of histidine biosynthesis seems to be controlled primarily by regulation of HisG enzymatic activity. The chain is ATP phosphoribosyltransferase from Yersinia pseudotuberculosis serotype O:1b (strain IP 31758).